The primary structure comprises 185 residues: Peptide deformylase (185 aa).

Fe cation-binding residues include Cys94 and His136. Residue Glu137 is part of the active site. His140 contacts Fe cation.

This sequence belongs to the polypeptide deformylase family. Fe(2+) serves as cofactor.

It catalyses the reaction N-terminal N-formyl-L-methionyl-[peptide] + H2O = N-terminal L-methionyl-[peptide] + formate. Functionally, removes the formyl group from the N-terminal Met of newly synthesized proteins. Requires at least a dipeptide for an efficient rate of reaction. N-terminal L-methionine is a prerequisite for activity but the enzyme has broad specificity at other positions. The chain is Peptide deformylase from Chlorobium limicola (strain DSM 245 / NBRC 103803 / 6330).